Consider the following 283-residue polypeptide: Formamidopyrimidine-DNA glycosylase (283 aa).

Pro-2 serves as the catalytic Schiff-base intermediate with DNA. The active-site Proton donor is the Glu-3. The active-site Proton donor; for beta-elimination activity is the Lys-58. DNA contacts are provided by His-100, Arg-119, and Arg-162. The FPG-type zinc-finger motif lies at Arg-247–Arg-283. The active-site Proton donor; for delta-elimination activity is Arg-273.

It belongs to the FPG family. In terms of assembly, monomer. The cofactor is Zn(2+).

The catalysed reaction is Hydrolysis of DNA containing ring-opened 7-methylguanine residues, releasing 2,6-diamino-4-hydroxy-5-(N-methyl)formamidopyrimidine.. It carries out the reaction 2'-deoxyribonucleotide-(2'-deoxyribose 5'-phosphate)-2'-deoxyribonucleotide-DNA = a 3'-end 2'-deoxyribonucleotide-(2,3-dehydro-2,3-deoxyribose 5'-phosphate)-DNA + a 5'-end 5'-phospho-2'-deoxyribonucleoside-DNA + H(+). In terms of biological role, involved in base excision repair of DNA damaged by oxidation or by mutagenic agents. Acts as a DNA glycosylase that recognizes and removes damaged bases. Has a preference for oxidized purines, such as 7,8-dihydro-8-oxoguanine (8-oxoG). Has AP (apurinic/apyrimidinic) lyase activity and introduces nicks in the DNA strand. Cleaves the DNA backbone by beta-delta elimination to generate a single-strand break at the site of the removed base with both 3'- and 5'-phosphates. This Cereibacter sphaeroides (strain ATCC 17025 / ATH 2.4.3) (Rhodobacter sphaeroides) protein is Formamidopyrimidine-DNA glycosylase.